Consider the following 128-residue polypeptide: Tachykinin-4 (128 aa).

An N-terminal signal peptide occupies residues 1–16 (MLPLLALLLLIGPSVC). Positions 17 to 54 (TTAGDREELAFGAEAESWVTVNLKGIPVPSIELKLQEL) are excised as a propeptide. A Methionine amide modification is found at Met-66. Positions 69 to 128 (RVGGYQLGRIVQDLLGTRGLSIEGTCRQAASQQRARPGAVTRESLQSREEDEAPLTTSNV) are excised as a propeptide. The interval 96-128 (QAASQQRARPGAVTRESLQSREEDEAPLTTSNV) is disordered.

The protein belongs to the tachykinin family. In terms of tissue distribution, expressed in hematopoietic cells with highest levels in pre- and pro-B cells but not in later developmental stages. Also detected in uterus, skeletal muscle, brain, spleen, stomach, skin and lactating mammary gland and in cells of myeloid lineage including dendritic and microglial cells and macrophages. In uterus, highest expression is observed in non-pregnant diestrus mice and in day 5 pregnant mice. Compared with mice in diestrus, decreases 2.6-fold in uteri from non-pregnant mice in estrus and 10.2-fold in day 17 pregnant mice. Detected at sites of chronic inflammation such as granulomas.

Its subcellular location is the secreted. Functionally, tachykinins are active peptides which excite neurons, evoke behavioral responses, are potent vasodilators and secretagogues, and contract (directly or indirectly) many smooth muscles. Hemokinin induces plasma extravasation, mast cell degranulation, muscle contraction, salivary secretion and scratching behavior. Increases sperm motility. Induces potent analgesic effects and may play a role in pain modulation. Promotes survival of bone marrow B lineage cells and of cultured LPS-stimulated pre-B cells and may act as an autocrine factor required for B-cell survival and proliferation. Lowers systemic arterial pressure following intravenous injection. Induces interferon-gamma production and may play a role in the inflammatory response. Shows potent affinity and specificity for the NK-1 receptor. This is Tachykinin-4 from Mus musculus (Mouse).